A 364-amino-acid chain; its full sequence is MKKAILMMTFGSPEEISFEGVAEFFTNIRRGVRPQDHEIQTLYDNYIRIGGTPLQRITREEVNLVKERLGEEYGIYFANKFSRPFIPDVIKQMETDGVEECICLILEPHYSFYSVMGYEKFLESQQIRFLVIKDWYQQQSLLDFWTDEIRKILRNEVGEESFKVIFSAHSVPIFALDYGDPYIDQIFDNSRLIAEQLGLMTDQYTNTWQSESDIGIPWIKPDVLEYLREQKQHPEHYIFVPISFISEHIEVLFDNDVECYDLCQELGVTYHRPPMPNTDSRLIDALVATVRANEDKEFKTFLPEEETFDELAPSATTKDIMKETDDLQMPEFVKKLIEKKGRENVKMPYLIKKMLEKAGKLPKE.

Fe-coproporphyrin III is bound by residues Arg29 and Tyr118. Fe(2+) is bound by residues His169 and Glu250.

This sequence belongs to the ferrochelatase family.

It localises to the cytoplasm. It catalyses the reaction Fe-coproporphyrin III + 2 H(+) = coproporphyrin III + Fe(2+). The protein operates within porphyrin-containing compound metabolism; protoheme biosynthesis. Functionally, involved in coproporphyrin-dependent heme b biosynthesis. Catalyzes the insertion of ferrous iron into coproporphyrin III to form Fe-coproporphyrin III. The polypeptide is Coproporphyrin III ferrochelatase (Streptococcus pneumoniae (strain Taiwan19F-14)).